We begin with the raw amino-acid sequence, 156 residues long: Arginine repressor (156 aa).

The protein belongs to the ArgR family.

The protein resides in the cytoplasm. It participates in amino-acid biosynthesis; L-arginine biosynthesis [regulation]. In terms of biological role, regulates arginine biosynthesis genes. The sequence is that of Arginine repressor from Shewanella putrefaciens (strain CN-32 / ATCC BAA-453).